The sequence spans 186 residues: Peptidyl-tRNA hydrolase (186 aa).

Residue Tyr14 participates in tRNA binding. Residue His19 is the Proton acceptor of the active site. Residues Phe65, Asn67, and Asn113 each coordinate tRNA.

It belongs to the PTH family. As to quaternary structure, monomer.

The protein localises to the cytoplasm. It catalyses the reaction an N-acyl-L-alpha-aminoacyl-tRNA + H2O = an N-acyl-L-amino acid + a tRNA + H(+). Its function is as follows. Hydrolyzes ribosome-free peptidyl-tRNAs (with 1 or more amino acids incorporated), which drop off the ribosome during protein synthesis, or as a result of ribosome stalling. In terms of biological role, catalyzes the release of premature peptidyl moieties from peptidyl-tRNA molecules trapped in stalled 50S ribosomal subunits, and thus maintains levels of free tRNAs and 50S ribosomes. In Limosilactobacillus fermentum (strain NBRC 3956 / LMG 18251) (Lactobacillus fermentum), this protein is Peptidyl-tRNA hydrolase.